A 273-amino-acid polypeptide reads, in one-letter code: Large ribosomal subunit protein uL2cz/uL2cy (273 aa).

Disordered regions lie at residues 1-20 and 225-273; these read MAKHLYKTPIPSTRKGTIDR and PVDH…RRRK.

This sequence belongs to the universal ribosomal protein uL2 family. Part of the 50S ribosomal subunit.

The protein localises to the plastid. It localises to the chloroplast. This is Large ribosomal subunit protein uL2cz/uL2cy (rpl2-A) from Oryza nivara (Indian wild rice).